Reading from the N-terminus, the 195-residue chain is Glycerol-3-phosphate acyltransferase 1 (195 aa).

5 helical membrane-spanning segments follow: residues 6-26 (VILT…GHFL), 52-72 (LGIA…FLVV), 74-94 (LGLK…AVAG), 117-137 (LAVY…LTFL), and 168-188 (FGLG…ISLF).

It belongs to the PlsY family. In terms of assembly, probably interacts with PlsX.

It is found in the cell membrane. The enzyme catalyses an acyl phosphate + sn-glycerol 3-phosphate = a 1-acyl-sn-glycero-3-phosphate + phosphate. It participates in lipid metabolism; phospholipid metabolism. Its function is as follows. Catalyzes the transfer of an acyl group from acyl-phosphate (acyl-PO(4)) to glycerol-3-phosphate (G3P) to form lysophosphatidic acid (LPA). This enzyme utilizes acyl-phosphate as fatty acyl donor, but not acyl-CoA or acyl-ACP. The chain is Glycerol-3-phosphate acyltransferase 1 from Moorella thermoacetica (strain ATCC 39073 / JCM 9320).